We begin with the raw amino-acid sequence, 1096 residues long: Mediator of replication checkpoint protein 1 (1096 aa).

Residues 68–85 (EGKKAPEQNHNNGKDRSE) are compositionally biased toward basic and acidic residues. A disordered region spans residues 68–90 (EGKKAPEQNHNNGKDRSENSLPT). Residue serine 144 is modified to Phosphoserine. Disordered stretches follow at residues 166–200 (ALKT…IEPQ), 294–316 (IQSE…YKKP), and 336–365 (DDSS…LHEN). Over residues 181-200 (RIDSSGATSQTQPIKSIEPQ) the composition is skewed to polar residues. The segment covering 294–315 (IQSELASEDSKREKARNVEYKK) has biased composition (basic and acidic residues). Over residues 336–346 (DDSSSNEDDDI) the composition is skewed to acidic residues. 3 positions are modified to phosphoserine: serine 409, serine 411, and serine 434. The stretch at 488–542 (QKEVIETKGLKLEDMAKEKEIVENLLEQEILRNKRIRQKEKRREKLEENDFQLNA) forms a coiled coil. A disordered region spans residues 527 to 620 (EKRREKLEEN…VEAKPKEKAD (94 aa)). Positions 547–560 (SDSGSESSGFALSG) are enriched in low complexity. Over residues 591–600 (KQKKSHHVKH) the composition is skewed to basic residues. 2 positions are modified to phosphoserine: serine 605 and serine 607. Threonine 609 carries the post-translational modification Phosphothreonine. The span at 611 to 620 (VEAKPKEKAD) shows a compositional bias: basic and acidic residues. Positions 652–716 (DTQNIEEVMA…IKELKKRGVT (65 aa)) form a coiled coil. The interval 724-743 (EESEDEWHGIGGADGEGSDD) is disordered. Serine 801 and serine 807 each carry phosphoserine. Polar residues predominate over residues 881 to 898 (DTQDNSINVGDNTGNNEQ). The disordered stretch occupies residues 881-903 (DTQDNSINVGDNTGNNEQKPVDQ). At serine 911 the chain carries Phosphoserine. Positions 1058–1096 (RKTEGSHRYHHDHHNKKMKMKTKTKSNKLFESGQDSFDN) are disordered. Positions 1065–1083 (RYHHDHHNKKMKMKTKTKS) are enriched in basic residues.

As to quaternary structure, interacts with CDC45 in S phase. Phosphorylated by MEC1 and RAD53.

The protein localises to the nucleus. Functionally, required for normal DNA replication. Phosphorylated in response to DNA replication stress. Phosphorylation allows it to mediate the activation of RAD53. The sequence is that of Mediator of replication checkpoint protein 1 (MRC1) from Saccharomyces cerevisiae (strain ATCC 204508 / S288c) (Baker's yeast).